A 190-amino-acid polypeptide reads, in one-letter code: MIEIPSDLHPDLVPLAFLLGNWAGAGVSDFPGAEKCNFGQEVTFSHDGRDFLEYVSHTWVLDDEGKQVRPLETETGYWRIDKDRKVEVVMARDQGVIEIWYGELADQKPQIDLVTDAVARTAASGPYSGGKRLYGYVKSDLMWVGEKATPEVELRPYMSAHLKKVVTPEEVAEMARNLPDMPDDGIAFFK.

Residues 20–26 (GNWAGAG) carry the GXWXGXG motif.

This sequence belongs to the nitrobindin family.

This is Ferric nitrobindin-like protein from Streptomyces griseus subsp. griseus (strain JCM 4626 / CBS 651.72 / NBRC 13350 / KCC S-0626 / ISP 5235).